We begin with the raw amino-acid sequence, 309 residues long: Tagatose-6-phosphate kinase (309 aa).

Belongs to the carbohydrate kinase PfkB family. LacC subfamily.

It carries out the reaction D-tagatofuranose 6-phosphate + ATP = D-tagatofuranose 1,6-bisphosphate + ADP + H(+). Its pathway is carbohydrate metabolism; D-tagatose 6-phosphate degradation; D-glyceraldehyde 3-phosphate and glycerone phosphate from D-tagatose 6-phosphate: step 1/2. The protein is Tagatose-6-phosphate kinase of Streptococcus pyogenes serotype M6 (strain ATCC BAA-946 / MGAS10394).